The sequence spans 201 residues: Fimbrial protein FimX (201 aa).

The first 21 residues, 1–21 (MQAKTFLLGAALAGVALAAHA), serve as a signal peptide directing secretion. The cysteines at positions 37 and 79 are disulfide-linked.

The protein belongs to the fimbrial protein family.

It localises to the fimbrium. Bordetella pertussis is the causative agent of whooping cough. An essential step in the disease process is the attachment of the bacteria to the ciliated epithelium of the respiratory tract, enabling the organism to resist normal host-clearance mechanisms. It is unclear which bacterial cell surface component are responsible for adherence but the fimbriae of B.pertussis are prime candidates for being involved in this process. This is Fimbrial protein FimX (fimX) from Bordetella pertussis (strain Tohama I / ATCC BAA-589 / NCTC 13251).